A 461-amino-acid polypeptide reads, in one-letter code: D-phenylhydantoinase (461 aa).

A divalent metal cation contacts are provided by His-59, His-61, and Lys-151. At Lys-151 the chain carries N6-carboxylysine. Tyr-156 lines the substrate pocket. Residues His-182 and His-239 each coordinate a divalent metal cation. Ser-286 provides a ligand contact to substrate. Asp-313 provides a ligand contact to a divalent metal cation. Substrate is bound at residue Asn-335.

The protein belongs to the metallo-dependent hydrolases superfamily. Hydantoinase/dihydropyrimidinase family. Homotetramer. The cofactor is a divalent metal cation. In terms of processing, carboxylation allows a single lysine to coordinate two divalent metal cations.

The enzyme catalyses D-5-phenylhydantoin + H2O = N-carbamoyl-D-phenylglycine + H(+). Functionally, catalyzes the stereospecific hydrolysis of the cyclic amide bond of D-hydantoin derivatives with an aromatic side chains at the 5'-position. Has no activity on dihydropyrimidines. The physiological function is unknown. The sequence is that of D-phenylhydantoinase from Escherichia coli O9:H4 (strain HS).